The chain runs to 141 residues: Putative pre-16S rRNA nuclease (141 aa).

It belongs to the YqgF nuclease family.

The protein resides in the cytoplasm. Could be a nuclease involved in processing of the 5'-end of pre-16S rRNA. The polypeptide is Putative pre-16S rRNA nuclease (Cupriavidus pinatubonensis (strain JMP 134 / LMG 1197) (Cupriavidus necator (strain JMP 134))).